The sequence spans 509 residues: Maturase K (509 aa).

The protein belongs to the intron maturase 2 family. MatK subfamily.

Its subcellular location is the plastid. It is found in the chloroplast. Functionally, usually encoded in the trnK tRNA gene intron. Probably assists in splicing its own and other chloroplast group II introns. In Nicotiana plumbaginifolia (Leadwort-leaved tobacco), this protein is Maturase K.